The primary structure comprises 512 residues: MGCIKSKRKDNLNDDEVDSKTQPVRNTDRTIYVRDPTSNKQQRPVPEFHLLPGQRFQTKDPEEQGDIVVALYPYDGIHPDDLSFKKGEKMKVLEEHGEWWKAKSLSSKREGFIPSNYVAKVNTLETEEWFFKDITRKDAERQLLAPGNSAGAFLIRESETLKGSFSLSVRDYDPMHGDVIKHYKIRSLDNGGYYISPRITFPCISDMIKHYQKQSDGLCRRLEKACISPKPQKPWDKDAWEIPRESIKLVKKLGAGQFGEVWMGYYNNSTKVAVKTLKPGTMSVQAFLEEANLMKTLQHDKLVRLYAVVTKEEPIYIITEFMAKGSLLDFLKSDEGGKVLLPKLIDFSAQIAEGMAYIERKNYIHRDLRAANVLVSESLMCKIADFGLARVIEDNEYTAREGAKFPIKWTAPEAINFGCFTIKSDVWSFGILLYEIVTYGKIPYPGRTNADVMSALSQGYRMPRMENCPDELYDIMKMCWKEKAEERPTFDYLQSVLDDFYTATEGQYQQQP.

Positions 1–45 are disordered; that stretch reads MGCIKSKRKDNLNDDEVDSKTQPVRNTDRTIYVRDPTSNKQQRPV. Residue Gly-2 is the site of N-myristoyl glycine attachment. A lipid anchor (S-palmitoyl cysteine) is attached at Cys-3. The residue at position 19 (Ser-19) is a Phosphoserine. An SH3 domain is found at 63 to 123; that stretch reads EQGDIVVALY…PSNYVAKVNT (61 aa). Residues 129–226 enclose the SH2 domain; the sequence is WFFKDITRKD…GLCRRLEKAC (98 aa). Tyr-193 is subject to Phosphotyrosine. Ser-228 is subject to Phosphoserine. The region spanning 247–501 is the Protein kinase domain; sequence IKLVKKLGAG…YLQSVLDDFY (255 aa). ATP-binding positions include 253 to 261 and Lys-275; that span reads LGAGQFGEV. Phosphotyrosine occurs at positions 306 and 316. The active-site Proton acceptor is the Asp-367. Tyr-397 bears the Phosphotyrosine; by autocatalysis mark. Phosphotyrosine is present on residues Tyr-460 and Tyr-473. Tyr-508 bears the Phosphotyrosine; by autocatalysis, CSK and MATK mark.

This sequence belongs to the protein kinase superfamily. Tyr protein kinase family. SRC subfamily. Interacts with TEC. Interacts (via SH2 domain) with FLT3 (tyrosine phosphorylated). Interacts with LIME1 and with CD79A upon activation of the B-cell antigen receptor. Interacts with the B-cell receptor complex. Interacts with phosphorylated THEMIS2. Interacts with EPOR. Interacts with MS4A2/FCER1B. Interaction (via the SH2 and SH3 domains) with MUC1 is stimulated by IL7 and the subsequent phosphorylation increases the binding between MUC1 and CTNNB1/beta-catenin. Interacts with ADAM15. Interacts with NDFIP2 and more weakly with NDFIP1. Interacts with FASLG. Interacts with KIT. Interacts with HCLS1. Interacts with FCGR2B. Interacts with FCGR1A; the interaction may be indirect. Interacts with CD19, CD22, CD79A and CD79B. Interacts (via SH3 domain) with CBLC, PPP1R15A and PDE4A. Interacts with TGFB1I1. Interacts (via SH3 domain) with PIK3R1, the regulatory subunit of phosphatidylinositol 3-kinase; this interaction enhances phosphatidylinositol 3-kinase activity. Interacts with CSF2RB, the common subunit of the IL3, IL5 and CSF2 receptors. Interacts with PAG1; identified in a complex with PAG1 and STAT3. Interacts with ABL1. Interacts with PTPN6/SHP-1. Interacts (via SH3 domain) with SCIMP (via proline-rich region). This interaction facilitates the phosphorylation of SCIMP on 'Tyr-96', which enhances binding of SCIMP to TLR4, and consequently the phosphorylation of TLR4 in response to stimulation by lipopolysaccharide in macrophages. Interacts with LPXN (via LD motif 3) and the interaction is induced upon B-cell antigen receptor (BCR) activation. Interacts (via SH3-domain) with ANKRD54 (via ankyrin repeat region) in an activation-independent status of LYN. Forms a multiprotein complex with ANKRD54 and HCLS1. Interacts (via SH2 and SH3 domains) with UNC119; leading to LYN activation. Interacts with CD36. Interacts with LYN. Interacts with SKAP1 and FYB1; this interaction promotes the phosphorylation of CLNK. Interacts with BCAR1/CAS and NEDD9/HEF1. Ubiquitinated by CBL, leading to its degradation. Post-translationally, autophosphorylated. Phosphorylated on tyrosine residues in response to KIT signaling. Phosphorylation at Tyr-397 is required for optimal activity. Phosphorylation at Tyr-508 inhibits kinase activity. Phosphorylated at Tyr-508 by CSK. Dephosphorylated by PTPRC/CD45. Becomes rapidly phosphorylated upon activation of the B-cell receptor and the immunoglobulin receptor FCGR1A. Phosphorylated in response to ITGB1 in B-cells. Detected in bone marrow-derived monocytes and macrophages (at protein level). Expressed predominantly in B-lymphoid and myeloid cells.

The protein localises to the cell membrane. It is found in the nucleus. The protein resides in the cytoplasm. Its subcellular location is the perinuclear region. It localises to the golgi apparatus. The protein localises to the membrane. It carries out the reaction L-tyrosyl-[protein] + ATP = O-phospho-L-tyrosyl-[protein] + ADP + H(+). Its activity is regulated as follows. Subject to autoinhibition, mediated by intramolecular interactions between the SH2 domain and the C-terminal phosphotyrosine. Phosphorylation at Tyr-397 is required for optimal activity. Phosphorylated by CSK at Tyr-508; phosphorylation at Tyr-508 inhibits kinase activity. Kinase activity is modulated by dephosphorylation by PTPRC/CD45. Inhibited by dasatinib, PP2, and SU6656. Non-receptor tyrosine-protein kinase that transmits signals from cell surface receptors and plays an important role in the regulation of innate and adaptive immune responses, hematopoiesis, responses to growth factors and cytokines, integrin signaling, but also responses to DNA damage and genotoxic agents. Functions primarily as negative regulator, but can also function as activator, depending on the context. Required for the initiation of the B-cell response, but also for its down-regulation and termination. Plays an important role in the regulation of B-cell differentiation, proliferation, survival and apoptosis, and is important for immune self-tolerance. Acts downstream of several immune receptors, including the B-cell receptor, CD79A, CD79B, CD5, CD19, CD22, FCER1, FCGR2, FCGR1A, TLR2 and TLR4. Plays a role in the inflammatory response to bacterial lipopolysaccharide. Mediates the responses to cytokines and growth factors in hematopoietic progenitors, platelets, erythrocytes, and in mature myeloid cells, such as dendritic cells, neutrophils and eosinophils. Acts downstream of EPOR, KIT, MPL, the chemokine receptor CXCR4, as well as the receptors for IL3, IL5 and CSF2. Plays an important role in integrin signaling. Regulates cell proliferation, survival, differentiation, migration, adhesion, degranulation, and cytokine release. Involved in the regulation of endothelial activation, neutrophil adhesion and transendothelial migration. Down-regulates signaling pathways by phosphorylation of immunoreceptor tyrosine-based inhibitory motifs (ITIM), that then serve as binding sites for phosphatases, such as PTPN6/SHP-1, PTPN11/SHP-2 and INPP5D/SHIP-1, that modulate signaling by dephosphorylation of kinases and their substrates. Phosphorylates LIME1 in response to CD22 activation. Phosphorylates BTK, CBL, CD5, CD19, CD72, CD79A, CD79B, CSF2RB, DOK1, HCLS1, MS4A2/FCER1B, SYK and TEC. Phosphorylates PIRB at Tyr-794 and Tyr-824, which is required for PIRB interaction with PTPN6/SHP-1 and PTPN11/SHP-2. Promotes phosphorylation of SIRPA, PTPN6/SHP-1, PTPN11/SHP-2 and INPP5D/SHIP-1. Required for rapid phosphorylation of FER in response to FCER1 activation. Mediates KIT phosphorylation. Acts as an effector of EPOR (erythropoietin receptor) in controlling KIT expression and may play a role in erythroid differentiation during the switch between proliferation and maturation. Depending on the context, activates or inhibits several signaling cascades. Regulates phosphatidylinositol 3-kinase activity and AKT1 activation. Regulates activation of the MAP kinase signaling cascade, including activation of MAP2K1/MEK1, MAPK1/ERK2, MAPK3/ERK1, MAPK8/JNK1 and MAPK9/JNK2. Mediates activation of STAT5A and/or STAT5B. Phosphorylates LPXN on 'Tyr-72'. Kinase activity facilitates TLR4-TLR6 heterodimerization and signal initiation. Phosphorylates SCIMP on 'Tyr-96'; this enhances binding of SCIMP to TLR4, promoting the phosphorylation of TLR4, and a selective cytokine response to lipopolysaccharide in macrophages. Phosphorylates CLNK. Phosphorylates BCAR1/CAS and NEDD9/HEF1. The polypeptide is Tyrosine-protein kinase Lyn (Lyn) (Mus musculus (Mouse)).